The chain runs to 211 residues: BAG family molecular chaperone regulator 2 (211 aa).

A2 is modified (N-acetylalanine). Phosphoserine occurs at positions 20, 31, and 73. Positions 20 to 61 (SMADRSSRLLESLDQLELRVEALREAATAVEQEKEILLEMIH) form a coiled coil. One can recognise a BAG domain in the interval 109–189 (SLKHATRIID…NIENSDKAIK (81 aa)).

Binds to the ATPase domain of HSP/HSC70 chaperones. May interact with NWD1. Interacts with HSPA1A (via NBD), HSPA1B (via NBD) and HSPA8. May interact with DNJC9; the interaction seems to be histone-dependent.

In terms of biological role, co-chaperone for HSP70 and HSC70 chaperone proteins. Acts as a nucleotide-exchange factor (NEF) promoting the release of ADP from the HSP70 and HSC70 proteins thereby triggering client/substrate protein release. The chain is BAG family molecular chaperone regulator 2 (BAG2) from Homo sapiens (Human).